A 436-amino-acid polypeptide reads, in one-letter code: Eukaryotic translation initiation factor 5 (436 aa).

Residue 27–34 participates in GTP binding; the sequence is GKGNGIKT. Residues 177-203 form a disordered region; the sequence is NSDKGSSNDDDDDDWEPEPVEPNGMLS. The span at 184–195 shows a compositional bias: acidic residues; that stretch reads NDDDDDDWEPEP. Residues 216-379 form the W2 domain; the sequence is EKSEEQRLDM…KEAEEETEEE (164 aa). Over residues 396–408 the composition is skewed to basic and acidic residues; sequence LRQQKEKAAREAQ. Positions 396 to 436 are disordered; that stretch reads LRQQKEKAAREAQQKSAKATNGNAAAASGANDEEDLDIDDI. The span at 409 to 425 shows a compositional bias: low complexity; it reads QKSAKATNGNAAAASGA. A compositionally biased stretch (acidic residues) spans 426–436; it reads NDEEDLDIDDI.

It belongs to the eIF-2-beta/eIF-5 family.

Its function is as follows. Catalyzes the hydrolysis of GTP bound to the 40S ribosomal initiation complex (40S.mRNA.Met-tRNA[F].eIF-2.GTP) with the subsequent joining of a 60S ribosomal subunit resulting in the release of eIF-2 and the guanine nucleotide. The subsequent joining of a 60S ribosomal subunit results in the formation of a functional 80S initiation complex (80S.mRNA.Met-tRNA[F]). The chain is Eukaryotic translation initiation factor 5 from Caenorhabditis elegans.